The sequence spans 174 residues: Peptide deformylase (174 aa).

The Fe cation site is built by Cys96 and His138. Glu139 is a catalytic residue. Position 142 (His142) interacts with Fe cation.

The protein belongs to the polypeptide deformylase family. It depends on Fe(2+) as a cofactor.

It carries out the reaction N-terminal N-formyl-L-methionyl-[peptide] + H2O = N-terminal L-methionyl-[peptide] + formate. In terms of biological role, removes the formyl group from the N-terminal Met of newly synthesized proteins. Requires at least a dipeptide for an efficient rate of reaction. N-terminal L-methionine is a prerequisite for activity but the enzyme has broad specificity at other positions. This Helicobacter pylori (strain HPAG1) protein is Peptide deformylase.